The following is a 379-amino-acid chain: Mating-type protein MAT-1 (379 aa).

A DNA-binding region (alpha box) is located at residues K60–R117.

Belongs to the MATALPHA1 family.

The protein localises to the nucleus. Its function is as follows. Mating type proteins are sequence specific DNA-binding proteins that act as master switches in fungal differentiation by controlling gene expression in a cell type-specific fashion. Transcriptional activator that induces the transcription of alpha-specific genes. This is Mating-type protein MAT-1 (MAT1) from Cochliobolus carbonum (strain 26-R-13) (Maize leaf spot fungus).